The chain runs to 511 residues: Histidine ammonia-lyase (511 aa).

A cross-link (5-imidazolinone (Ala-Gly)) is located at residues 142 to 144; the sequence is ASG. At Ser-143 the chain carries 2,3-didehydroalanine (Ser).

Belongs to the PAL/histidase family. In terms of processing, contains an active site 4-methylidene-imidazol-5-one (MIO), which is formed autocatalytically by cyclization and dehydration of residues Ala-Ser-Gly.

The protein resides in the cytoplasm. The catalysed reaction is L-histidine = trans-urocanate + NH4(+). The protein operates within amino-acid degradation; L-histidine degradation into L-glutamate; N-formimidoyl-L-glutamate from L-histidine: step 1/3. The protein is Histidine ammonia-lyase of Brucella abortus (strain S19).